Consider the following 535-residue polypeptide: Nuclear/nucleolar GTPase 2 (535 aa).

The disordered stretch occupies residues 1–42 (MAKKKERAVNVSGKPRHSLDVNRANDKKGAGGGAGGGGGGRS). Residues 17-29 (HSLDVNRANDKKG) are compositionally biased toward basic and acidic residues. The span at 30-41 (AGGGAGGGGGGR) shows a compositional bias: gly residues. The 162-residue stretch at 213–374 (WGELYKVIDS…LIDCPGVVYQ (162 aa)) folds into the CP-type G domain. The tract at residues 261-264 (NKCD) is G4. Residues 290-292 (SIN) form a G5 region. The tract at residues 323–330 (GYPNVGKS) is G1. A G2 region spans residues 349 to 353 (GETKV). The segment at 367-370 (DCPG) is G3. The interval 464–495 (FFVPPPQQGEDSPSETAEPVDKSDEEGVSSDR) is disordered.

It belongs to the TRAFAC class YlqF/YawG GTPase family. RsgA subfamily.

The protein localises to the nucleus. It is found in the nucleolus. Functionally, GTPase involved in pre-60S ribosomal subunit maturation. This chain is Nuclear/nucleolar GTPase 2, found in Oryza sativa subsp. indica (Rice).